Consider the following 358-residue polypeptide: Neutral protease 2 homolog MEP8 (358 aa).

A signal peptide spans 1–19; the sequence is MKLSSILLALAALVSPAFS. The propeptide occupies 20-179; the sequence is YAISHLPRSE…EKAIKPVDKR (160 aa). 2 disulfide bridges follow: cysteine 186–cysteine 256 and cysteine 263–cysteine 281. Zn(2+) is bound at residue histidine 305. Glutamate 306 is an active-site residue. 2 residues coordinate Zn(2+): histidine 309 and aspartate 320.

This sequence belongs to the peptidase M35 family. Zn(2+) is required as a cofactor.

The protein localises to the secreted. It catalyses the reaction Preferential cleavage of bonds with hydrophobic residues in P1'. Also 3-Asn-|-Gln-4 and 8-Gly-|-Ser-9 bonds in insulin B chain.. In terms of biological role, secreted metalloproteinase that allows assimilation of proteinaceous substrates. Shows high activities on basic nuclear substrates such as histone and protamine. May be involved in virulence. The sequence is that of Neutral protease 2 homolog MEP8 (MEP8) from Coccidioides posadasii (strain C735) (Valley fever fungus).